Here is a 1393-residue protein sequence, read N- to C-terminus: DNA-directed RNA polymerase subunit beta'' (1393 aa).

Positions 224, 295, 302, and 305 each coordinate Zn(2+).

This sequence belongs to the RNA polymerase beta' chain family. RpoC2 subfamily. As to quaternary structure, in plastids the minimal PEP RNA polymerase catalytic core is composed of four subunits: alpha, beta, beta', and beta''. When a (nuclear-encoded) sigma factor is associated with the core the holoenzyme is formed, which can initiate transcription. It depends on Zn(2+) as a cofactor.

It localises to the plastid. The protein localises to the chloroplast. It carries out the reaction RNA(n) + a ribonucleoside 5'-triphosphate = RNA(n+1) + diphosphate. Functionally, DNA-dependent RNA polymerase catalyzes the transcription of DNA into RNA using the four ribonucleoside triphosphates as substrates. This chain is DNA-directed RNA polymerase subunit beta'', found in Manihot esculenta (Cassava).